Reading from the N-terminus, the 485-residue chain is Argininosuccinate lyase (485 aa).

It belongs to the lyase 1 family. Argininosuccinate lyase subfamily.

It is found in the cytoplasm. It catalyses the reaction 2-(N(omega)-L-arginino)succinate = fumarate + L-arginine. It participates in amino-acid biosynthesis; L-arginine biosynthesis; L-arginine from L-ornithine and carbamoyl phosphate: step 3/3. This is Argininosuccinate lyase from Nitrosopumilus maritimus (strain SCM1).